A 405-amino-acid chain; its full sequence is MRILTFTGKGGVGKTSVSAATAVRLSEMGHRTLVLSTDPAHSLSDSFNIQLGAEPTKIKENLHAIEVNPYVDLKQNWHSVQKYYTRIFMAQGVSGVMADEMTILPGMEELFSLLRIKRYKSAGLYDALVLDTAPTGETLRLLSLPDTLSWGMKAVKNVNKYIVRPLSKPLSKMSDKIAYYIPPEDAIESVDQVFDELEDIREILTDNVKSTVRLVMNAEKMSIKETMRALTYLNLYGFKVDMVLVNKLLDAQENSGYLEKWKGIQQKYLGEIEEGFSPLPVKKLKMYDQEIVGVKSLEVFAHDIYGDTDPSGMMYDEPPIKFVRQGDVYEVQLKLMFANPVDIDVWVTGDELFVQIGNQRKIITLPVSLTGLEPGDAVFKDKWLHIPFDLEKQGQHHRTREYNKA.

8–15 (GKGGVGKT) is an ATP binding site.

This sequence belongs to the arsA ATPase family.

It catalyses the reaction arsenite(in) + ATP + H2O = arsenite(out) + ADP + phosphate + H(+). In terms of biological role, anion-transporting ATPase. Catalyzes the extrusion of arsenite. This is Putative arsenical pump-driving ATPase from Chlorobaculum tepidum (strain ATCC 49652 / DSM 12025 / NBRC 103806 / TLS) (Chlorobium tepidum).